A 464-amino-acid polypeptide reads, in one-letter code: ATP synthase subunit beta (464 aa).

148 to 155 (GGAGVGKT) lines the ATP pocket.

Belongs to the ATPase alpha/beta chains family. F-type ATPases have 2 components, CF(1) - the catalytic core - and CF(0) - the membrane proton channel. CF(1) has five subunits: alpha(3), beta(3), gamma(1), delta(1), epsilon(1). CF(0) has three main subunits: a(1), b(2) and c(9-12). The alpha and beta chains form an alternating ring which encloses part of the gamma chain. CF(1) is attached to CF(0) by a central stalk formed by the gamma and epsilon chains, while a peripheral stalk is formed by the delta and b chains.

The protein localises to the cell inner membrane. It catalyses the reaction ATP + H2O + 4 H(+)(in) = ADP + phosphate + 5 H(+)(out). In terms of biological role, produces ATP from ADP in the presence of a proton gradient across the membrane. The catalytic sites are hosted primarily by the beta subunits. The chain is ATP synthase subunit beta from Acinetobacter baumannii (strain AB0057).